A 183-amino-acid chain; its full sequence is ATP synthase subunit delta (183 aa).

Belongs to the ATPase delta chain family. As to quaternary structure, F-type ATPases have 2 components, F(1) - the catalytic core - and F(0) - the membrane proton channel. F(1) has five subunits: alpha(3), beta(3), gamma(1), delta(1), epsilon(1). F(0) has three main subunits: a(1), b(2) and c(10-14). The alpha and beta chains form an alternating ring which encloses part of the gamma chain. F(1) is attached to F(0) by a central stalk formed by the gamma and epsilon chains, while a peripheral stalk is formed by the delta and b chains.

The protein localises to the cell inner membrane. In terms of biological role, f(1)F(0) ATP synthase produces ATP from ADP in the presence of a proton or sodium gradient. F-type ATPases consist of two structural domains, F(1) containing the extramembraneous catalytic core and F(0) containing the membrane proton channel, linked together by a central stalk and a peripheral stalk. During catalysis, ATP synthesis in the catalytic domain of F(1) is coupled via a rotary mechanism of the central stalk subunits to proton translocation. This protein is part of the stalk that links CF(0) to CF(1). It either transmits conformational changes from CF(0) to CF(1) or is implicated in proton conduction. In Nitratidesulfovibrio vulgaris (strain ATCC 29579 / DSM 644 / CCUG 34227 / NCIMB 8303 / VKM B-1760 / Hildenborough) (Desulfovibrio vulgaris), this protein is ATP synthase subunit delta.